The following is a 508-amino-acid chain: Purine-cytosine permease fcyB (508 aa).

Topologically, residues 1–72 are cytoplasmic; that stretch reads MAGAFDFDLE…AEQTDTSVFN (72 aa). A helical membrane pass occupies residues 73 to 93; the sequence is IGSMWLAANMVVSSFAIGVLG. Residues 94 to 104 are Extracellular-facing; the sequence is KSVYSLGFVDA. The helical transmembrane segment at 105 to 125 threads the bilayer; it reads ILTVLFFNLLGIMTVCFFSCF. At 126–147 the chain is on the cytoplasmic side; that stretch reads GPFGLRQMVFSRLWFGWYVTKG. The chain crosses the membrane as a helical span at residues 148–168; the sequence is FAVLNILACLGWSAANAIVGA. Residues 169–177 lie on the Extracellular side of the membrane; sequence QMLHAVNSD. The helical transmembrane segment at 178 to 198 threads the bilayer; the sequence is VPGFAAILIISICTLLVTFAG. The Cytoplasmic portion of the chain corresponds to 199–200; the sequence is YK. The helical transmembrane segment at 201–221 threads the bilayer; sequence VVHLYEYWSWIPTFIVFMIIL. At 222–243 the chain is on the extracellular side; the sequence is GTFAHSGDFQNIPMGVGTSEMG. Residues 244-264 traverse the membrane as a helical segment; sequence SVLSFGSAVYGFATGWTSYAA. Over 265–278 the chain is Cytoplasmic; the sequence is DYTVYQPANRSKRK. Residues 279–299 traverse the membrane as a helical segment; sequence IFLSTWLGLIVPLLFVEMLGV. Residues 300–323 are Extracellular-facing; that stretch reads AVMTATDIKGSKYDVGYATSGNGG. The chain crosses the membrane as a helical span at residues 324–344; it reads LIAAVLQPLGGFGDFCLVILA. The Cytoplasmic portion of the chain corresponds to 345–374; sequence LSIVANNCPNFYSVALTVQVLSRYAQRVPR. A helical membrane pass occupies residues 375–395; that stretch reads FIWTLFGTGVSIAIAIPGYSH. Topologically, residues 396–404 are extracellular; it reads FETVLENFM. A helical transmembrane segment spans residues 405 to 425; that stretch reads NFIAYWLAIYSAIAIMDHFVF. The Cytoplasmic portion of the chain corresponds to 426–442; it reads KRGFSGYVVENFDKREK. The helical transmembrane segment at 443–463 threads the bilayer; that stretch reads LPVGIAATIAFGFGVAGMITG. At 464–477 the chain is on the extracellular side; sequence MSQPWYVGPIARHA. Residues 478–498 form a helical membrane-spanning segment; sequence AGGDVGFELGFAFAAFSYLCL. Residues 499 to 508 are Cytoplasmic-facing; it reads RPFEIKFFGR.

This sequence belongs to the purine-cytosine permease (2.A.39) family.

The protein resides in the cell membrane. Functionally, this permease has a broad specificity towards purines, and also transports cytosine, but neither uracil nor thymine. Contributes very little in purine uptake. Its major role may be the uptake of cytosine. This chain is Purine-cytosine permease fcyB (fcyB), found in Emericella nidulans (strain FGSC A4 / ATCC 38163 / CBS 112.46 / NRRL 194 / M139) (Aspergillus nidulans).